The primary structure comprises 479 residues: Putative L-cysteine desulfhydrase 2 (479 aa).

The disordered stretch occupies residues 1 to 36 (MASLQSGGDAAANGVDADVDGAASPPSAKRPRAGAG). The segment covering 7–36 (GGDAAANGVDADVDGAASPPSAKRPRAGAG) has biased composition (low complexity). At K270 the chain carries N6-(pyridoxal phosphate)lysine.

It belongs to the class-V pyridoxal-phosphate-dependent aminotransferase family. Pyridoxal 5'-phosphate is required as a cofactor.

The catalysed reaction is L-cysteine + H2O = hydrogen sulfide + pyruvate + NH4(+) + H(+). Catalyzes the production of hydrogen sulfide (H2S) from cysteine. This chain is Putative L-cysteine desulfhydrase 2, found in Oryza sativa subsp. japonica (Rice).